A 430-amino-acid chain; its full sequence is Adenylosuccinate synthetase (430 aa).

GTP is bound by residues 11–17 (GDEGKGK) and 39–41 (GHS). The active-site Proton acceptor is the Asp-12. The Mg(2+) site is built by Asp-12 and Gly-39. IMP-binding positions include 12-15 (DEGK), 37-40 (NAGH), Thr-129, Arg-143, Asn-221, Thr-236, and Arg-300. His-40 (proton donor) is an active-site residue. Position 296-302 (296-302 (VSTGRKR)) interacts with substrate. Residues Arg-302, 328-330 (KLD), and 412-414 (GTG) contribute to the GTP site.

Belongs to the adenylosuccinate synthetase family. In terms of assembly, homodimer. Mg(2+) serves as cofactor.

The protein localises to the cytoplasm. It carries out the reaction IMP + L-aspartate + GTP = N(6)-(1,2-dicarboxyethyl)-AMP + GDP + phosphate + 2 H(+). The protein operates within purine metabolism; AMP biosynthesis via de novo pathway; AMP from IMP: step 1/2. Plays an important role in the de novo pathway and in the salvage pathway of purine nucleotide biosynthesis. Catalyzes the first committed step in the biosynthesis of AMP from IMP. This chain is Adenylosuccinate synthetase, found in Neurospora crassa (strain ATCC 24698 / 74-OR23-1A / CBS 708.71 / DSM 1257 / FGSC 987).